A 307-amino-acid chain; its full sequence is UDP-N-acetylenolpyruvoylglucosamine reductase (307 aa).

An FAD-binding PCMH-type domain is found at 34–198 (TGGNADFYLS…LEAAFTLEPG (165 aa)). The active site involves arginine 177. The active-site Proton donor is serine 227. The active site involves glutamate 297.

It belongs to the MurB family. FAD is required as a cofactor.

The protein localises to the cytoplasm. It catalyses the reaction UDP-N-acetyl-alpha-D-muramate + NADP(+) = UDP-N-acetyl-3-O-(1-carboxyvinyl)-alpha-D-glucosamine + NADPH + H(+). It functions in the pathway cell wall biogenesis; peptidoglycan biosynthesis. In terms of biological role, cell wall formation. The protein is UDP-N-acetylenolpyruvoylglucosamine reductase of Staphylococcus haemolyticus (strain JCSC1435).